Reading from the N-terminus, the 249-residue chain is Transcription factor MYB90 (249 aa).

2 consecutive HTH myb-type domains span residues 5–57 (SKGL…LNYL) and 58–112 (KPSI…SKKH). DNA-binding regions (H-T-H motif) lie at residues 33–57 (WHQV…LNYL) and 85–108 (WSLI…NTHL).

In terms of assembly, interacts with BHLH12/MYC1, BHLH1/GL3/MYC6, BHLH2/EGL3/MYC146, and BHLH42/TT8. In terms of tissue distribution, expressed only in leaves and siliques.

It is found in the nucleus. Functionally, transcription activator, when associated with BHLH12/MYC1, EGL3, or GL3. Promotes the synthesis of phenylpropanoid-derived compounds such as anthocyanins. This chain is Transcription factor MYB90 (MYB90), found in Arabidopsis thaliana (Mouse-ear cress).